The chain runs to 867 residues: Retinoblastoma-related protein 1 (867 aa).

The segment at 275–476 (TPVTSAMTTA…EKGSSLYNSL (202 aa)) is domain A. The interval 275–722 (TPVTSAMTTA…NEVFVPAAKP (448 aa)) is pocket; binds RPD3I and RBAP1. The spacer stretch occupies residues 477 to 594 (IVARPSVASE…PVGGNEKCAD (118 aa)). Residues 512–563 (EGLPATPSKKRAAGPDDNADPRSPKRSCNESRNTVVERNLQTPPPKQSHMVS) form a disordered region. Residues 530 to 540 (ADPRSPKRSCN) are compositionally biased toward basic and acidic residues. Over residues 541-552 (ESRNTVVERNLQ) the composition is skewed to polar residues. The domain B stretch occupies residues 595–722 (VTIHIFFSKI…NEVFVPAAKP (128 aa)). Disordered regions lie at residues 734-762 (PEDK…MSPK) and 843-867 (QING…ETDT).

This sequence belongs to the retinoblastoma protein (RB) family. In terms of assembly, interacts with RPD3I, RBAP1, the Arabidopsis cyclin CYCD3-1, the mastrevirus replication-associated protein A (RepA) and the begomovirus replication-associated protein (Rep). Ubiquitous.

It is found in the nucleus. Its function is as follows. Regulator of biological processes that recruits a histone deacetylase to control gene transcription. May play a role in the entry into mitosis, negatively regulating the cell proliferation. Formation of stable complexes with geminiviridae replication-associated proteins may create a cellular environment which favors viral DNA replication. This Zea mays (Maize) protein is Retinoblastoma-related protein 1 (RBR1).